The chain runs to 181 residues: ATP synthase subunit delta (181 aa).

The protein belongs to the ATPase delta chain family. F-type ATPases have 2 components, F(1) - the catalytic core - and F(0) - the membrane proton channel. F(1) has five subunits: alpha(3), beta(3), gamma(1), delta(1), epsilon(1). F(0) has three main subunits: a(1), b(2) and c(10-14). The alpha and beta chains form an alternating ring which encloses part of the gamma chain. F(1) is attached to F(0) by a central stalk formed by the gamma and epsilon chains, while a peripheral stalk is formed by the delta and b chains.

The protein localises to the cell membrane. Its function is as follows. F(1)F(0) ATP synthase produces ATP from ADP in the presence of a proton or sodium gradient. F-type ATPases consist of two structural domains, F(1) containing the extramembraneous catalytic core and F(0) containing the membrane proton channel, linked together by a central stalk and a peripheral stalk. During catalysis, ATP synthesis in the catalytic domain of F(1) is coupled via a rotary mechanism of the central stalk subunits to proton translocation. Functionally, this protein is part of the stalk that links CF(0) to CF(1). It either transmits conformational changes from CF(0) to CF(1) or is implicated in proton conduction. This Shouchella clausii (strain KSM-K16) (Alkalihalobacillus clausii) protein is ATP synthase subunit delta.